The primary structure comprises 261 residues: Hydroxyethylthiazole kinase (261 aa).

Met-39 contributes to the substrate binding site. Residues Arg-115 and Thr-159 each contribute to the ATP site. Gly-186 lines the substrate pocket.

The protein belongs to the Thz kinase family. The cofactor is Mg(2+).

It catalyses the reaction 5-(2-hydroxyethyl)-4-methylthiazole + ATP = 4-methyl-5-(2-phosphooxyethyl)-thiazole + ADP + H(+). It participates in cofactor biosynthesis; thiamine diphosphate biosynthesis; 4-methyl-5-(2-phosphoethyl)-thiazole from 5-(2-hydroxyethyl)-4-methylthiazole: step 1/1. In terms of biological role, catalyzes the phosphorylation of the hydroxyl group of 4-methyl-5-beta-hydroxyethylthiazole (THZ). The protein is Hydroxyethylthiazole kinase of Macrococcus caseolyticus (strain JCSC5402) (Macrococcoides caseolyticum).